A 187-amino-acid polypeptide reads, in one-letter code: Probable nicotinate-nucleotide adenylyltransferase (187 aa).

The protein belongs to the NadD family.

The enzyme catalyses nicotinate beta-D-ribonucleotide + ATP + H(+) = deamido-NAD(+) + diphosphate. The protein operates within cofactor biosynthesis; NAD(+) biosynthesis; deamido-NAD(+) from nicotinate D-ribonucleotide: step 1/1. Its function is as follows. Catalyzes the reversible adenylation of nicotinate mononucleotide (NaMN) to nicotinic acid adenine dinucleotide (NaAD). The polypeptide is Probable nicotinate-nucleotide adenylyltransferase (Anaeromyxobacter sp. (strain K)).